The chain runs to 185 residues: Ethylene-responsive transcription factor ERF017 (185 aa).

Positions 11–68 form a DNA-binding region, AP2/ERF; sequence KYKGVRKRKWGKWVSEIRLPNSRERIWLGSYDTPEKAARAFDAALYCLRGNNAKFNFP.

The protein belongs to the AP2/ERF transcription factor family. ERF subfamily.

It localises to the nucleus. Functionally, probably acts as a transcriptional activator. Binds to the GCC-box pathogenesis-related promoter element. May be involved in the regulation of gene expression by stress factors and by components of stress signal transduction pathways. The polypeptide is Ethylene-responsive transcription factor ERF017 (ERF017) (Arabidopsis thaliana (Mouse-ear cress)).